The chain runs to 433 residues: Divergent protein kinase domain 2B (433 aa).

The first 29 residues, 1-29, serve as a signal peptide directing secretion; it reads MEPRLGPKAAALHLGWPFLLLWVSGLSYS. Asparagine 100 carries N-linked (GlcNAc...) asparagine glycosylation.

Belongs to the DIPK family.

The protein resides in the secreted. The chain is Divergent protein kinase domain 2B (DIPK2B) from Bos taurus (Bovine).